The primary structure comprises 256 residues: Large ribosomal subunit protein bL21c (256 aa).

The transit peptide at 1 to 55 directs the protein to the chloroplast; that stretch reads MASATLAFSCSSLCATLKLPQNLNPLLLNVPPLSKPFSGVVSPPSLSRLSLLPVA.

In terms of assembly, component of the chloroplast large ribosomal subunit (LSU). Mature 70S chloroplast ribosomes of higher plants consist of a small (30S) and a large (50S) subunit. The 30S small subunit contains 1 molecule of ribosomal RNA (16S rRNA) and 24 different proteins. The 50S large subunit contains 3 rRNA molecules (23S, 5S and 4.5S rRNA) and 33 different proteins.

Its subcellular location is the plastid. The protein resides in the chloroplast. Component of the chloroplast ribosome (chloro-ribosome), a dedicated translation machinery responsible for the synthesis of chloroplast genome-encoded proteins, including proteins of the transcription and translation machinery and components of the photosynthetic apparatus. The protein is Large ribosomal subunit protein bL21c (RPL21) of Spinacia oleracea (Spinach).